A 270-amino-acid chain; its full sequence is 4-hydroxy-tetrahydrodipicolinate reductase (270 aa).

NAD(+) contacts are provided by residues 8–13 (GALGRM), Asp-34, 102–104 (GTT), and 128–131 (SQNY). Residue His-160 is the Proton donor/acceptor of the active site. A (S)-2,3,4,5-tetrahydrodipicolinate-binding site is contributed by His-161. Catalysis depends on Lys-164, which acts as the Proton donor. 170–171 (GT) is a (S)-2,3,4,5-tetrahydrodipicolinate binding site.

Belongs to the DapB family.

It is found in the cytoplasm. The enzyme catalyses (S)-2,3,4,5-tetrahydrodipicolinate + NAD(+) + H2O = (2S,4S)-4-hydroxy-2,3,4,5-tetrahydrodipicolinate + NADH + H(+). It carries out the reaction (S)-2,3,4,5-tetrahydrodipicolinate + NADP(+) + H2O = (2S,4S)-4-hydroxy-2,3,4,5-tetrahydrodipicolinate + NADPH + H(+). It participates in amino-acid biosynthesis; L-lysine biosynthesis via DAP pathway; (S)-tetrahydrodipicolinate from L-aspartate: step 4/4. Its function is as follows. Catalyzes the conversion of 4-hydroxy-tetrahydrodipicolinate (HTPA) to tetrahydrodipicolinate. The protein is 4-hydroxy-tetrahydrodipicolinate reductase of Methanococcus vannielii (strain ATCC 35089 / DSM 1224 / JCM 13029 / OCM 148 / SB).